The chain runs to 89 residues: Small ribosomal subunit protein uS15 (89 aa).

This sequence belongs to the universal ribosomal protein uS15 family. As to quaternary structure, part of the 30S ribosomal subunit. Forms a bridge to the 50S subunit in the 70S ribosome, contacting the 23S rRNA.

Its function is as follows. One of the primary rRNA binding proteins, it binds directly to 16S rRNA where it helps nucleate assembly of the platform of the 30S subunit by binding and bridging several RNA helices of the 16S rRNA. Functionally, forms an intersubunit bridge (bridge B4) with the 23S rRNA of the 50S subunit in the ribosome. The polypeptide is Small ribosomal subunit protein uS15 (Salmonella schwarzengrund (strain CVM19633)).